The primary structure comprises 92 residues: Envelope glycoprotein J (92 aa).

The signal sequence occupies residues 1–21 (MSLRAVWHLGLLGSLVGAVLA). At 22–49 (ATHRGPAANTTDPLTHAPVSPHPSPLGG) the chain is on the extracellular side. N-linked (GlcNAc...) asparagine; by host glycosylation is present at asparagine 30. A helical membrane pass occupies residues 50–70 (FAVPLVVGGLCAVVLGAACLL). Residues 71–92 (ELLRRTCRGWGRYHPYMDPVVV) are Cytoplasmic-facing.

The protein belongs to the alphaherpesvirinae glycoprotein J family.

The protein localises to the host Golgi apparatus membrane. It localises to the host endoplasmic reticulum membrane. It is found in the host endosome membrane. In terms of biological role, inhibits host cell apoptosis. Induces an increase in reactive oxygen species (ROS) in the host cell. This is Envelope glycoprotein J (gJ) from Homo sapiens (Human).